We begin with the raw amino-acid sequence, 430 residues long: Histidinol dehydrogenase (430 aa).

3 residues coordinate NAD(+): tyrosine 129, glutamine 190, and asparagine 213. Serine 236, glutamine 258, and histidine 261 together coordinate substrate. Glutamine 258 and histidine 261 together coordinate Zn(2+). Residues glutamate 326 and histidine 327 each act as proton acceptor in the active site. The substrate site is built by histidine 327, aspartate 360, glutamate 414, and histidine 419. Aspartate 360 contributes to the Zn(2+) binding site. Residue histidine 419 coordinates Zn(2+).

It belongs to the histidinol dehydrogenase family. The cofactor is Zn(2+).

It carries out the reaction L-histidinol + 2 NAD(+) + H2O = L-histidine + 2 NADH + 3 H(+). Its pathway is amino-acid biosynthesis; L-histidine biosynthesis; L-histidine from 5-phospho-alpha-D-ribose 1-diphosphate: step 9/9. Functionally, catalyzes the sequential NAD-dependent oxidations of L-histidinol to L-histidinaldehyde and then to L-histidine. In Caldanaerobacter subterraneus subsp. tengcongensis (strain DSM 15242 / JCM 11007 / NBRC 100824 / MB4) (Thermoanaerobacter tengcongensis), this protein is Histidinol dehydrogenase.